The chain runs to 251 residues: Hydroxyacylglutathione hydrolase (251 aa).

Residues H53, H55, D57, H58, H110, D127, and H165 each coordinate Zn(2+).

This sequence belongs to the metallo-beta-lactamase superfamily. Glyoxalase II family. In terms of assembly, monomer. The cofactor is Zn(2+).

It carries out the reaction an S-(2-hydroxyacyl)glutathione + H2O = a 2-hydroxy carboxylate + glutathione + H(+). Its pathway is secondary metabolite metabolism; methylglyoxal degradation; (R)-lactate from methylglyoxal: step 2/2. In terms of biological role, thiolesterase that catalyzes the hydrolysis of S-D-lactoyl-glutathione to form glutathione and D-lactic acid. This is Hydroxyacylglutathione hydrolase from Escherichia coli (strain UTI89 / UPEC).